Here is an 826-residue protein sequence, read N- to C-terminus: Ubiquitin carboxyl-terminal hydrolase 16 (826 aa).

A UBP-type zinc finger spans residues 22–142 (PVCRHIRKGL…QVVDYVRKQA (121 aa)). Zn(2+) is bound by residues Cys-24, His-26, Cys-48, Cys-51, Cys-74, Cys-77, Cys-82, His-90, His-94, His-103, Cys-116, and Cys-119. Lys-140 is covalently cross-linked (Glycyl lysine isopeptide (Lys-Gly) (interchain with G-Cter in SUMO2)). The tract at residues 144–189 (NTTPESAEDNGNIELENKKLEKESKNEQEREKKENMARENPSMNST) is disordered. Positions 158–180 (LENKKLEKESKNEQEREKKENMA) are enriched in basic and acidic residues. Phosphoserine is present on Ser-188. The 631-residue stretch at 195 to 825 (KGLSNLGNTC…QAYLLFYERI (631 aa)) folds into the USP domain. The active-site Nucleophile is the Cys-204. Over residues 393 to 407 (SGKKSINDKNLKKTM) the composition is skewed to basic and acidic residues. Residues 393–458 (SGKKSINDKN…QAKNQRRQQK (66 aa)) form a disordered region. Residues 408 to 419 (EDEDKDSEEEKD) show a composition bias toward acidic residues. Ser-414 is modified (phosphoserine). Residues 420–429 (NDSYLKERND) are compositionally biased toward basic and acidic residues. Positions 437-457 (HLQKKAKKQAKKQAKNQRRQQ) are enriched in basic residues. Phosphoserine occurs at positions 530 and 551. His-760 functions as the Proton acceptor in the catalytic mechanism.

Belongs to the peptidase C19 family. USP16 subfamily. As to quaternary structure, homotetramer. Associates with late pre-40S ribosomes. Interacts with CEP78; promoting deubiquitination of tektins. Post-translationally, phosphorylated at the onset of mitosis and dephosphorylated during the metaphase/anaphase transition. Phosphorylation by AURKB enhances the deubiquitinase activity.

The protein localises to the nucleus. The enzyme catalyses Thiol-dependent hydrolysis of ester, thioester, amide, peptide and isopeptide bonds formed by the C-terminal Gly of ubiquitin (a 76-residue protein attached to proteins as an intracellular targeting signal).. Its function is as follows. Specifically deubiquitinates 'Lys-120' of histone H2A (H2AK119Ub), a specific tag for epigenetic transcriptional repression, thereby acting as a coactivator. Deubiquitination of histone H2A is a prerequisite for subsequent phosphorylation at 'Ser-11' of histone H3 (H3S10ph), and is required for chromosome segregation when cells enter into mitosis. In resting B- and T-lymphocytes, phosphorylation by AURKB leads to enhance its activity, thereby maintaining transcription in resting lymphocytes. Regulates Hox gene expression via histone H2A deubiquitination. Prefers nucleosomal substrates. Does not deubiquitinate histone H2B. Also deubiquitinates non-histone proteins, such as ribosomal protein RPS27A: deubiquitination of monoubiquitinated RPS27A promotes maturation of the 40S ribosomal subunit. Also mediates deubiquitination of tektin proteins (TEKT1, TEKT2, TEK3, TEKT4 and TEKT5), promoting their stability. The polypeptide is Ubiquitin carboxyl-terminal hydrolase 16 (Bos taurus (Bovine)).